A 36-amino-acid chain; its full sequence is Photosystem I reaction center subunit VIII (36 aa).

Residues 1–21 (MITFSFPSIFVPLVGLVFPAI) traverse the membrane as a helical segment.

The protein belongs to the PsaI family.

Its subcellular location is the plastid. The protein localises to the chloroplast thylakoid membrane. In terms of biological role, may help in the organization of the PsaL subunit. In Coffea arabica (Arabian coffee), this protein is Photosystem I reaction center subunit VIII.